The following is a 471-amino-acid chain: UDP-N-acetylmuramate--L-alanine ligase (471 aa).

114–120 (GTHGKTT) contributes to the ATP binding site.

This sequence belongs to the MurCDEF family.

It is found in the cytoplasm. It carries out the reaction UDP-N-acetyl-alpha-D-muramate + L-alanine + ATP = UDP-N-acetyl-alpha-D-muramoyl-L-alanine + ADP + phosphate + H(+). It participates in cell wall biogenesis; peptidoglycan biosynthesis. Functionally, cell wall formation. In Methylobacterium nodulans (strain LMG 21967 / CNCM I-2342 / ORS 2060), this protein is UDP-N-acetylmuramate--L-alanine ligase.